We begin with the raw amino-acid sequence, 719 residues long: ATP-dependent RNA helicase SUV3 homolog, mitochondrial (719 aa).

Residues 1–18 (MRRASGVLRVLGGLTQRC) constitute a mitochondrion transit peptide. The interval 16-42 (QRCSTSSTPSSSRFPAMNSRRKRNSVR) is disordered. One can recognise a Helicase ATP-binding domain in the interval 181-319 (EARSVTRKIF…PAAIDIVKKL (139 aa)). 194 to 201 (GPTNSGKT) is a binding site for ATP. The 157-residue stretch at 343 to 499 (KAIESYSNIE…PTYDQIETFS (157 aa)) folds into the Helicase C-terminal domain. Residues 662–692 (SKAAGSSKSSEGKRENPSKSEREKPNKRSSI) are disordered. The segment covering 671–687 (SEGKRENPSKSEREKPN) has biased composition (basic and acidic residues). A coiled-coil region spans residues 693-717 (LEALLKRADISEDDLEQLREELNKN).

This sequence belongs to the helicase family. The cofactor is Mg(2+). Requires Mn(2+) as cofactor.

The protein localises to the mitochondrion matrix. Its subcellular location is the nucleus. It catalyses the reaction ATP + H2O = ADP + phosphate + H(+). Its function is as follows. ATPase and DNA/RNA helicase able to unwind DNA/DNA, DNA/RNA and RNA/RNA duplexes in the 5'-3' direction. This Caenorhabditis elegans protein is ATP-dependent RNA helicase SUV3 homolog, mitochondrial.